The chain runs to 231 residues: Flagellar L-ring protein (231 aa).

Residues 1-18 (MNRLMIVSLLGIATALGG) form the signal peptide. Cys19 is lipidated: N-palmitoyl cysteine. The S-diacylglycerol cysteine moiety is linked to residue Cys19. A disordered region spans residues 118–141 (LSLSAEYGGSRDAKGDSQAGQSNS).

It belongs to the FlgH family. As to quaternary structure, the basal body constitutes a major portion of the flagellar organelle and consists of four rings (L,P,S, and M) mounted on a central rod.

The protein localises to the cell outer membrane. It is found in the bacterial flagellum basal body. In terms of biological role, assembles around the rod to form the L-ring and probably protects the motor/basal body from shearing forces during rotation. The chain is Flagellar L-ring protein from Pseudomonas aeruginosa (strain LESB58).